A 167-amino-acid polypeptide reads, in one-letter code: UPF0225 protein VV1358 (167 aa).

This sequence belongs to the UPF0225 family.

This Vibrio vulnificus (strain YJ016) protein is UPF0225 protein VV1358.